A 192-amino-acid chain; its full sequence is Xanthine phosphoribosyltransferase (192 aa).

The xanthine site is built by Leu-20 and Asn-27. 128–132 (ANGQA) is a 5-phospho-alpha-D-ribose 1-diphosphate binding site. Lys-156 is a xanthine binding site.

This sequence belongs to the purine/pyrimidine phosphoribosyltransferase family. Xpt subfamily. Homodimer.

It is found in the cytoplasm. It carries out the reaction XMP + diphosphate = xanthine + 5-phospho-alpha-D-ribose 1-diphosphate. It participates in purine metabolism; XMP biosynthesis via salvage pathway; XMP from xanthine: step 1/1. Its function is as follows. Converts the preformed base xanthine, a product of nucleic acid breakdown, to xanthosine 5'-monophosphate (XMP), so it can be reused for RNA or DNA synthesis. The chain is Xanthine phosphoribosyltransferase from Listeria innocua serovar 6a (strain ATCC BAA-680 / CLIP 11262).